Consider the following 385-residue polypeptide: Aryl-alcohol dehydrogenase [NADP(+)] (385 aa).

Y76 serves as the catalytic Proton donor. 238–248 (NVLCAGKIRTD) serves as a coordination point for NADP(+).

It belongs to the aldo/keto reductase family. Aldo/keto reductase 2 subfamily. In terms of processing, the N-terminus is blocked.

It catalyses the reaction an aromatic primary alcohol + NADP(+) = an aromatic aldehyde + NADPH + H(+). This chain is Aryl-alcohol dehydrogenase [NADP(+)], found in Phanerodontia chrysosporium (White-rot fungus).